We begin with the raw amino-acid sequence, 360 residues long: Peptide chain release factor 1 (360 aa).

Gln-237 bears the N5-methylglutamine mark.

The protein belongs to the prokaryotic/mitochondrial release factor family. Methylated by PrmC. Methylation increases the termination efficiency of RF1.

The protein localises to the cytoplasm. Functionally, peptide chain release factor 1 directs the termination of translation in response to the peptide chain termination codons UAG and UAA. In Stutzerimonas stutzeri (strain A1501) (Pseudomonas stutzeri), this protein is Peptide chain release factor 1.